The following is a 393-amino-acid chain: GDSL esterase/lipase At1g28600 (393 aa).

The N-terminal stretch at 1–22 is a signal peptide; that stretch reads MASLDSLVIFLFSTLFVTIVSS. The active-site Nucleophile is Ser-38. Residues Asn-133 and Asn-317 are each glycosylated (N-linked (GlcNAc...) asparagine). Active-site residues include Asp-340 and His-343. N-linked (GlcNAc...) asparagine glycosylation is present at Asn-382.

The protein belongs to the 'GDSL' lipolytic enzyme family.

Its subcellular location is the secreted. This chain is GDSL esterase/lipase At1g28600, found in Arabidopsis thaliana (Mouse-ear cress).